Here is a 768-residue protein sequence, read N- to C-terminus: DNA ligase (768 aa).

Residues D30–D34, S79–L80, and E190 each bind NAD(+). Residue K192 is the N6-AMP-lysine intermediate of the active site. NAD(+) contacts are provided by R213, E250, K367, and K391. Residues C485, C488, C503, and C509 each contribute to the Zn(2+) site. A BRCT domain is found at A678–Q767.

Belongs to the NAD-dependent DNA ligase family. LigA subfamily. Mg(2+) is required as a cofactor. It depends on Mn(2+) as a cofactor.

It catalyses the reaction NAD(+) + (deoxyribonucleotide)n-3'-hydroxyl + 5'-phospho-(deoxyribonucleotide)m = (deoxyribonucleotide)n+m + AMP + beta-nicotinamide D-nucleotide.. Functionally, DNA ligase that catalyzes the formation of phosphodiester linkages between 5'-phosphoryl and 3'-hydroxyl groups in double-stranded DNA using NAD as a coenzyme and as the energy source for the reaction. It is essential for DNA replication and repair of damaged DNA. In Magnetococcus marinus (strain ATCC BAA-1437 / JCM 17883 / MC-1), this protein is DNA ligase.